The following is a 708-amino-acid chain: Phosphate acetyltransferase (708 aa).

A phosphate acetyltransferase region spans residues 388–708; it reads EFCYNLKLLS…TIALTSIQSE (321 aa).

The protein in the N-terminal section; belongs to the CobB/CobQ family. In the C-terminal section; belongs to the phosphate acetyltransferase and butyryltransferase family. In terms of assembly, homohexamer.

Its subcellular location is the cytoplasm. The catalysed reaction is acetyl-CoA + phosphate = acetyl phosphate + CoA. The protein operates within metabolic intermediate biosynthesis; acetyl-CoA biosynthesis; acetyl-CoA from acetate: step 2/2. Functionally, involved in acetate metabolism. The sequence is that of Phosphate acetyltransferase (pta) from Buchnera aphidicola subsp. Acyrthosiphon pisum (strain APS) (Acyrthosiphon pisum symbiotic bacterium).